The following is a 370-amino-acid chain: Phosphoribosylformylglycinamidine cyclo-ligase (370 aa).

It belongs to the AIR synthase family.

The protein localises to the cytoplasm. It catalyses the reaction 2-formamido-N(1)-(5-O-phospho-beta-D-ribosyl)acetamidine + ATP = 5-amino-1-(5-phospho-beta-D-ribosyl)imidazole + ADP + phosphate + H(+). The protein operates within purine metabolism; IMP biosynthesis via de novo pathway; 5-amino-1-(5-phospho-D-ribosyl)imidazole from N(2)-formyl-N(1)-(5-phospho-D-ribosyl)glycinamide: step 2/2. The protein is Phosphoribosylformylglycinamidine cyclo-ligase of Rhodospirillum rubrum (strain ATCC 11170 / ATH 1.1.1 / DSM 467 / LMG 4362 / NCIMB 8255 / S1).